The sequence spans 478 residues: Glutamyl-tRNA(Gln) amidotransferase subunit A 2 (478 aa).

Residues Lys-79 and Ser-154 each act as charge relay system in the active site. Ser-178 (acyl-ester intermediate) is an active-site residue.

It belongs to the amidase family. GatA subfamily. Heterotrimer of A, B and C subunits.

The enzyme catalyses L-glutamyl-tRNA(Gln) + L-glutamine + ATP + H2O = L-glutaminyl-tRNA(Gln) + L-glutamate + ADP + phosphate + H(+). Allows the formation of correctly charged Gln-tRNA(Gln) through the transamidation of misacylated Glu-tRNA(Gln) in organisms which lack glutaminyl-tRNA synthetase. The reaction takes place in the presence of glutamine and ATP through an activated gamma-phospho-Glu-tRNA(Gln). This Clostridium acetobutylicum (strain ATCC 824 / DSM 792 / JCM 1419 / IAM 19013 / LMG 5710 / NBRC 13948 / NRRL B-527 / VKM B-1787 / 2291 / W) protein is Glutamyl-tRNA(Gln) amidotransferase subunit A 2 (gatA2).